Here is a 466-residue protein sequence, read N- to C-terminus: Uronate isomerase (466 aa).

The protein belongs to the metallo-dependent hydrolases superfamily. Uronate isomerase family.

The catalysed reaction is D-glucuronate = D-fructuronate. It carries out the reaction aldehydo-D-galacturonate = keto-D-tagaturonate. It participates in carbohydrate metabolism; pentose and glucuronate interconversion. This Brucella suis (strain ATCC 23445 / NCTC 10510) protein is Uronate isomerase.